Here is a 314-residue protein sequence, read N- to C-terminus: MNILLANPRGFCAGVDRAISIVELALEVHGAPIYVRHEVVHNRFVVDDLKAKGAIFVEELDEVPDSAIVIFSAHGVSQAVRQEAKRRGLKVFDATCPLVTKVHMQVARASKKGTKAILIGHQGHPEVIGTMGQYYNEQAGIFLVETVEDIANLPIHHHEDLTFMTQTTLSVDDTSGMIEALKNKYPAIQGPRKNDICYATTNRQQAVRELAKQAQLVLVVGSKNSSNSNRLAELASRMGVLAKLIDGPQDILPEWLDNVETIGITAGASAPEILVQSVVAHLQTLGATSVANLVGCEENMVFEVPKELRVREVK.

Cys12 contacts [4Fe-4S] cluster. Residues His41 and His74 each coordinate (2E)-4-hydroxy-3-methylbut-2-enyl diphosphate. Residues His41 and His74 each contribute to the dimethylallyl diphosphate site. Residues His41 and His74 each contribute to the isopentenyl diphosphate site. Cys96 contributes to the [4Fe-4S] cluster binding site. Residue His124 participates in (2E)-4-hydroxy-3-methylbut-2-enyl diphosphate binding. Residue His124 participates in dimethylallyl diphosphate binding. An isopentenyl diphosphate-binding site is contributed by His124. Residue Glu126 is the Proton donor of the active site. A (2E)-4-hydroxy-3-methylbut-2-enyl diphosphate-binding site is contributed by Thr167. Cys197 lines the [4Fe-4S] cluster pocket. The (2E)-4-hydroxy-3-methylbut-2-enyl diphosphate site is built by Ser225, Ser226, Asn227, and Ser269. Dimethylallyl diphosphate-binding residues include Ser225, Ser226, Asn227, and Ser269. Isopentenyl diphosphate contacts are provided by Ser225, Ser226, Asn227, and Ser269.

It belongs to the IspH family. It depends on [4Fe-4S] cluster as a cofactor.

The catalysed reaction is isopentenyl diphosphate + 2 oxidized [2Fe-2S]-[ferredoxin] + H2O = (2E)-4-hydroxy-3-methylbut-2-enyl diphosphate + 2 reduced [2Fe-2S]-[ferredoxin] + 2 H(+). It carries out the reaction dimethylallyl diphosphate + 2 oxidized [2Fe-2S]-[ferredoxin] + H2O = (2E)-4-hydroxy-3-methylbut-2-enyl diphosphate + 2 reduced [2Fe-2S]-[ferredoxin] + 2 H(+). It functions in the pathway isoprenoid biosynthesis; dimethylallyl diphosphate biosynthesis; dimethylallyl diphosphate from (2E)-4-hydroxy-3-methylbutenyl diphosphate: step 1/1. It participates in isoprenoid biosynthesis; isopentenyl diphosphate biosynthesis via DXP pathway; isopentenyl diphosphate from 1-deoxy-D-xylulose 5-phosphate: step 6/6. Functionally, catalyzes the conversion of 1-hydroxy-2-methyl-2-(E)-butenyl 4-diphosphate (HMBPP) into a mixture of isopentenyl diphosphate (IPP) and dimethylallyl diphosphate (DMAPP). Acts in the terminal step of the DOXP/MEP pathway for isoprenoid precursor biosynthesis. This chain is 4-hydroxy-3-methylbut-2-enyl diphosphate reductase, found in Haemophilus ducreyi (strain 35000HP / ATCC 700724).